The sequence spans 487 residues: Malonate-semialdehyde dehydrogenase 2 (487 aa).

The NAD(+) site is built by phenylalanine 154, lysine 178, glutamate 181, arginine 182, and serine 231. Cysteine 286 acts as the Nucleophile in catalysis. Glutamate 386 is a binding site for NAD(+).

This sequence belongs to the aldehyde dehydrogenase family. IolA subfamily. In terms of assembly, homotetramer.

It catalyses the reaction 3-oxopropanoate + NAD(+) + CoA + H2O = hydrogencarbonate + acetyl-CoA + NADH + H(+). The catalysed reaction is 2-methyl-3-oxopropanoate + NAD(+) + CoA + H2O = propanoyl-CoA + hydrogencarbonate + NADH + H(+). It participates in polyol metabolism; myo-inositol degradation into acetyl-CoA; acetyl-CoA from myo-inositol: step 7/7. Functionally, catalyzes the oxidation of malonate semialdehyde (MSA) and methylmalonate semialdehyde (MMSA) into acetyl-CoA and propanoyl-CoA, respectively. Is involved in a myo-inositol catabolic pathway. Bicarbonate, and not CO2, is the end-product of the enzymatic reaction. In Bacillus thuringiensis (strain Al Hakam), this protein is Malonate-semialdehyde dehydrogenase 2.